Here is an 85-residue protein sequence, read N- to C-terminus: Elongation factor 1-beta (85 aa).

It belongs to the EF-1-beta/EF-1-delta family.

Its function is as follows. Promotes the exchange of GDP for GTP in EF-1-alpha/GDP, thus allowing the regeneration of EF-1-alpha/GTP that could then be used to form the ternary complex EF-1-alpha/GTP/AAtRNA. The protein is Elongation factor 1-beta of Methanospirillum hungatei JF-1 (strain ATCC 27890 / DSM 864 / NBRC 100397 / JF-1).